The chain runs to 840 residues: Translation initiation factor IF-2 (840 aa).

2 disordered regions span residues Lys-94–Glu-157 and Pro-169–Pro-256. The segment covering Arg-95–Arg-143 has biased composition (basic and acidic residues). The span at Ala-144 to Glu-157 shows a compositional bias: low complexity. 2 stretches are compositionally biased toward basic and acidic residues: residues Ala-175–Asp-191 and Ser-223–Arg-232. The span at Arg-233–Gln-247 shows a compositional bias: basic residues. In terms of domain architecture, tr-type G spans Thr-340 to Lys-509. Positions Gly-349–Thr-356 are G1. Gly-349–Thr-356 is a binding site for GTP. The segment at Gly-374 to His-378 is G2. The tract at residues Asp-395–Gly-398 is G3. GTP-binding positions include Asp-395–His-399 and Asn-449–Asp-452. Residues Asn-449 to Asp-452 form a G4 region. Residues Ser-485–Lys-487 are G5.

This sequence belongs to the TRAFAC class translation factor GTPase superfamily. Classic translation factor GTPase family. IF-2 subfamily.

Its subcellular location is the cytoplasm. Its function is as follows. One of the essential components for the initiation of protein synthesis. Protects formylmethionyl-tRNA from spontaneous hydrolysis and promotes its binding to the 30S ribosomal subunits. Also involved in the hydrolysis of GTP during the formation of the 70S ribosomal complex. The chain is Translation initiation factor IF-2 from Pseudomonas aeruginosa (strain UCBPP-PA14).